The chain runs to 205 residues: Phospholipase D (205 aa).

A signal peptide spans 1 to 22 (MKSKNNKFIAVSISFILGIALG). The 28-residue stretch at 142–169 (VPGIAHNKVIIIDKKKVITGSFNFTVSA) folds into the PLD phosphodiesterase domain. Residues His147, Lys149, and Asp154 contribute to the active site.

The protein belongs to the phospholipase D family. Homodimer.

The protein resides in the secreted. The catalysed reaction is a 1,2-diacyl-sn-glycero-3-phosphocholine + H2O = a 1,2-diacyl-sn-glycero-3-phosphate + choline + H(+). In terms of biological role, could be a virulence factor. This chain is Phospholipase D (pld), found in Rickettsia prowazekii (strain Madrid E).